Here is a 239-residue protein sequence, read N- to C-terminus: Nicotinamide riboside transporter PnuC (239 aa).

Residues 1–21 (MDFFSVQNILVHIPIGAGGYD) lie on the Cytoplasmic side of the membrane. A helical transmembrane segment spans residues 22–42 (LSWIEAVGTIAGLLCIGLASL). The Periplasmic segment spans residues 43–48 (EKISNY). A helical transmembrane segment spans residues 49–68 (FFGLINVTLFGIIFFQIQLY). The Cytoplasmic segment spans residues 69–71 (ASL). Residues 72 to 89 (LLQVFFFAANIYGWYAWS) traverse the membrane as a helical segment. Residues 90–109 (RQTSQNEAELKIRWLPLPKA) are Periplasmic-facing. The chain crosses the membrane as a helical span at residues 110-127 (LSWLAVCVVSIGLMTVFI). At 128-157 (NPVFAFLTRVAVMIMQALGLQVVMPELQPD) the chain is on the cytoplasmic side. The chain crosses the membrane as a helical span at residues 158–177 (AFPFWDSCMMVLSIVAMILM). Over 178–183 (TRKYVE) the chain is Periplasmic. The helical transmembrane segment at 184–206 (NWLLWVIINVISVVIFALQGVYA) threads the bilayer. 2 residues coordinate beta-nicotinamide D-riboside: Trp-188 and Asn-192. Over 207–239 (MSLEYIILTFIALNGSRMWINSARERGSRALSH) the chain is Cytoplasmic.

Belongs to the nicotinamide ribonucleoside (NR) uptake permease (TC 4.B.1) family.

The protein resides in the cell inner membrane. Required for nicotinamide riboside transport across the inner membrane. The polypeptide is Nicotinamide riboside transporter PnuC (pnuC) (Escherichia coli (strain K12)).